A 127-amino-acid polypeptide reads, in one-letter code: Fatty acid-binding protein, liver (127 aa).

The residue at position 1 (Met-1) is an N-acetylmethionine. 2 positions are modified to N6-succinyllysine: Lys-31 and Lys-36. Phosphoserine is present on Ser-39. Lys-46 is modified (N6-succinyllysine). Ser-56 carries the phosphoserine modification. 3 positions are modified to N6-succinyllysine: Lys-57, Lys-78, and Lys-90. At Ser-100 the chain carries Phosphoserine. Asn-105 carries the post-translational modification Deamidated asparagine; alternate. Residues 105 to 106 (NG) constitute a cross-link (isoaspartyl glycine isopeptide (Asn-Gly); alternate). Lys-121 carries the N6-succinyllysine modification.

This sequence belongs to the calycin superfamily. Fatty-acid binding protein (FABP) family. In terms of assembly, monomer. In terms of processing, deamidation and transpeptidation at the beta carboxyl of Asn-105 forms an isoaspartyl residue and Edman degradation appears as though blocked. This rearrangement gives rise to an extra negative charge carried by the acid form.

It is found in the cytoplasm. In terms of biological role, plays a role in lipoprotein-mediated cholesterol uptake in hepatocytes. Binds cholesterol. Binds free fatty acids and their coenzyme A derivatives, bilirubin, and some other small molecules in the cytoplasm. May be involved in intracellular lipid transport. This Bos taurus (Bovine) protein is Fatty acid-binding protein, liver (FABP1).